We begin with the raw amino-acid sequence, 186 residues long: Auxin-responsive protein IAA4 (186 aa).

An EAR-like (transcriptional repression) motif is present at residues 18–22 (LRLGL). The tract at residues 25–62 (TEETVSCGKSNKRVLPEATEKEIESTGKTETASPPKAQ) is disordered. A compositionally biased stretch (basic and acidic residues) spans 38-51 (VLPEATEKEIESTG). Positions 88-175 (GNYVKVSMDG…SCKRLRIMKG (88 aa)) constitute a PB1 domain.

The protein belongs to the Aux/IAA family. As to quaternary structure, homodimers and heterodimers. Interacts with TPL. In terms of tissue distribution, preferentially expressed in stems, leaves and flowers.

The protein localises to the nucleus. Aux/IAA proteins are short-lived transcriptional factors that function as repressors of early auxin response genes at low auxin concentrations. Repression is thought to result from the interaction with auxin response factors (ARFs), proteins that bind to the auxin-responsive promoter element (AuxRE). Formation of heterodimers with ARF proteins may alter their ability to modulate early auxin response genes expression. This chain is Auxin-responsive protein IAA4 (IAA4), found in Arabidopsis thaliana (Mouse-ear cress).